A 270-amino-acid polypeptide reads, in one-letter code: Putative phosphoenolpyruvate synthase regulatory protein (270 aa).

150–157 (GVSRCGKT) provides a ligand contact to ADP.

This sequence belongs to the pyruvate, phosphate/water dikinase regulatory protein family. PSRP subfamily.

The catalysed reaction is [pyruvate, water dikinase] + ADP = [pyruvate, water dikinase]-phosphate + AMP + H(+). The enzyme catalyses [pyruvate, water dikinase]-phosphate + phosphate + H(+) = [pyruvate, water dikinase] + diphosphate. Functionally, bifunctional serine/threonine kinase and phosphorylase involved in the regulation of the phosphoenolpyruvate synthase (PEPS) by catalyzing its phosphorylation/dephosphorylation. This Shewanella baltica (strain OS223) protein is Putative phosphoenolpyruvate synthase regulatory protein.